The chain runs to 239 residues: Fatty acid metabolism regulator protein (239 aa).

The 69-residue stretch at 6 to 74 folds into the HTH gntR-type domain; sequence KGPASFAEKY…HGKPTRVNNF (69 aa). Residues 34–53 constitute a DNA-binding region (H-T-H motif); sequence ERELSELIGVTRTTLREVLQ.

As to quaternary structure, homodimer.

Its subcellular location is the cytoplasm. Multifunctional regulator of fatty acid metabolism. The polypeptide is Fatty acid metabolism regulator protein (Shewanella pealeana (strain ATCC 700345 / ANG-SQ1)).